Consider the following 426-residue polypeptide: Enolase (426 aa).

Glutamine 165 serves as a coordination point for (2R)-2-phosphoglycerate. Glutamate 209 (proton donor) is an active-site residue. Residues aspartate 244, glutamate 287, and aspartate 313 each contribute to the Mg(2+) site. Positions 338, 367, 368, and 389 each coordinate (2R)-2-phosphoglycerate. Lysine 338 acts as the Proton acceptor in catalysis.

Belongs to the enolase family. Requires Mg(2+) as cofactor.

The protein resides in the cytoplasm. Its subcellular location is the secreted. The protein localises to the cell surface. It carries out the reaction (2R)-2-phosphoglycerate = phosphoenolpyruvate + H2O. The protein operates within carbohydrate degradation; glycolysis; pyruvate from D-glyceraldehyde 3-phosphate: step 4/5. Functionally, catalyzes the reversible conversion of 2-phosphoglycerate (2-PG) into phosphoenolpyruvate (PEP). It is essential for the degradation of carbohydrates via glycolysis. The polypeptide is Enolase (Methanococcus vannielii (strain ATCC 35089 / DSM 1224 / JCM 13029 / OCM 148 / SB)).